We begin with the raw amino-acid sequence, 29 residues long: uncharacterized protein (29 aa).

The helical transmembrane segment at 7–27 (FSLVTTIIVLGLIVAVGLTAA) threads the bilayer.

Its subcellular location is the cell inner membrane. This is an uncharacterized protein from Escherichia coli O6:K15:H31 (strain 536 / UPEC).